Consider the following 531-residue polypeptide: Putative aldehyde dehydrogenase family 7 member A1 homolog (531 aa).

Residue 264–269 participates in NAD(+) binding; it reads GSSEIG. The active-site Proton acceptor is E286. Catalysis depends on C320, which acts as the Nucleophile.

The protein belongs to the aldehyde dehydrogenase family. Homotetramer.

The catalysed reaction is an aldehyde + NAD(+) + H2O = a carboxylate + NADH + 2 H(+). This Caenorhabditis elegans protein is Putative aldehyde dehydrogenase family 7 member A1 homolog (alh-9).